A 441-amino-acid chain; its full sequence is GTPase Der (441 aa).

EngA-type G domains lie at 3–167 (PLIA…PKGS) and 176–351 (TKIA…EQFA). GTP is bound by residues 9-16 (GRPNVGKS), 56-60 (DTGGF), 119-122 (NKID), 182-189 (GRPNVGKS), 229-233 (DTAGI), and 294-297 (NKWD). The KH-like domain maps to 352 to 436 (RRITTSDLNR…PMRLLFKGRE (85 aa)).

The protein belongs to the TRAFAC class TrmE-Era-EngA-EngB-Septin-like GTPase superfamily. EngA (Der) GTPase family. Associates with the 50S ribosomal subunit.

Functionally, GTPase that plays an essential role in the late steps of ribosome biogenesis. This chain is GTPase Der, found in Geotalea uraniireducens (strain Rf4) (Geobacter uraniireducens).